Reading from the N-terminus, the 316-residue chain is Melanocyte-stimulating hormone receptor (316 aa).

Over 1 to 37 the chain is Extracellular; the sequence is MPMQGAHRKLLGSLNSTPTATSNLGLAANHTGAPCLE. Asn-29 carries an N-linked (GlcNAc...) asparagine glycan. The helical transmembrane segment at 38–63 threads the bilayer; that stretch reads VSIPDGLFLSLGLVSLVENVLVVAAI. The Cytoplasmic segment spans residues 64–72; that stretch reads AKNRNLHSS. Residues 73–93 traverse the membrane as a helical segment; it reads MYCFICCLALSDLLVSGSNML. At 94–118 the chain is on the extracellular side; that stretch reads ETAVILLLEAGALATRTSVVQQLHN. Residues 119–140 traverse the membrane as a helical segment; sequence TIDVLTCSSMLCSLCFLGAIAV. At 141 to 163 the chain is on the cytoplasmic side; sequence DRYISIFYALRYHSIMTLPRAQR. A helical membrane pass occupies residues 164 to 183; that stretch reads AIAAIWVASVLSSTLFITYY. The Extracellular segment spans residues 184–191; that stretch reads DHAAVLLC. A helical membrane pass occupies residues 192-211; it reads LVVFFLAMLVLMAVLYVHML. Topologically, residues 212–240 are cytoplasmic; it reads ARACQHAHGIIRLHKRQSPAHQGFGLRGA. A helical membrane pass occupies residues 241–266; that stretch reads ATLTILLGIFFLCWGPFFLHLTLVVF. Over 267–279 the chain is Extracellular; sequence CPQHLTCSCIFKN. The helical transmembrane segment at 280-300 threads the bilayer; sequence FKVFLTLIICNTIIDPLIYAF. The Cytoplasmic portion of the chain corresponds to 301-316; that stretch reads RSQELRRTLKEVLCSW. Residue Cys-314 is the site of S-palmitoyl cysteine attachment.

Belongs to the G-protein coupled receptor 1 family. As to quaternary structure, interacts with MGRN1, but does not undergo MGRN1-mediated ubiquitination; this interaction competes with GNAS-binding and thus inhibits agonist-induced cAMP production. Interacts with OPN3; the interaction results in a decrease in MC1R-mediated cAMP signaling and ultimately a decrease in melanin production in melanocytes.

It localises to the cell membrane. In terms of biological role, receptor for MSH (alpha, beta and gamma) and ACTH. The activity of this receptor is mediated by G proteins which activate adenylate cyclase. Mediates melanogenesis, the production of eumelanin (black/brown) and phaeomelanin (red/yellow), via regulation of cAMP signaling in melanocytes. This Leontocebus fuscicollis (Brown-mantled tamarin) protein is Melanocyte-stimulating hormone receptor (MC1R).